Consider the following 59-residue polypeptide: MAIKPDYVKKTGNILMERYQDAFSREDFEHNKDAVTELTNIESKNVRNRIAGYITHKRN.

This sequence belongs to the eukaryotic ribosomal protein eS17 family.

This is Small ribosomal subunit protein eS17 from Halobacterium salinarum (strain ATCC 29341 / DSM 671 / R1).